We begin with the raw amino-acid sequence, 387 residues long: Succinyl-diaminopimelate desuccinylase (387 aa).

His-75 contributes to the Zn(2+) binding site. Asp-77 is an active-site residue. Asp-108 is a binding site for Zn(2+). Glu-139 acts as the Proton acceptor in catalysis. Residues Glu-140, Glu-168, and His-357 each contribute to the Zn(2+) site.

It belongs to the peptidase M20A family. DapE subfamily. In terms of assembly, homodimer. Zn(2+) serves as cofactor. Co(2+) is required as a cofactor.

It catalyses the reaction N-succinyl-(2S,6S)-2,6-diaminopimelate + H2O = (2S,6S)-2,6-diaminopimelate + succinate. It functions in the pathway amino-acid biosynthesis; L-lysine biosynthesis via DAP pathway; LL-2,6-diaminopimelate from (S)-tetrahydrodipicolinate (succinylase route): step 3/3. Functionally, catalyzes the hydrolysis of N-succinyl-L,L-diaminopimelic acid (SDAP), forming succinate and LL-2,6-diaminopimelate (DAP), an intermediate involved in the bacterial biosynthesis of lysine and meso-diaminopimelic acid, an essential component of bacterial cell walls. The sequence is that of Succinyl-diaminopimelate desuccinylase from Caulobacter sp. (strain K31).